A 72-amino-acid polypeptide reads, in one-letter code: Translation initiation factor IF-1 (72 aa).

Residues Met-1–Lys-72 enclose the S1-like domain. Position 60 is a phosphotyrosine (Tyr-60).

This sequence belongs to the IF-1 family. As to quaternary structure, component of the 30S ribosomal translation pre-initiation complex which assembles on the 30S ribosome in the order IF-2 and IF-3, IF-1 and N-formylmethionyl-tRNA(fMet); mRNA recruitment can occur at any time during PIC assembly.

It is found in the cytoplasm. Functionally, one of the essential components for the initiation of protein synthesis. Stabilizes the binding of IF-2 and IF-3 on the 30S subunit to which N-formylmethionyl-tRNA(fMet) subsequently binds. Helps modulate mRNA selection, yielding the 30S pre-initiation complex (PIC). Upon addition of the 50S ribosomal subunit IF-1, IF-2 and IF-3 are released leaving the mature 70S translation initiation complex. The protein is Translation initiation factor IF-1 of Geobacillus kaustophilus (strain HTA426).